The following is a 128-amino-acid chain: Type III secretion protein HrcQb (128 aa).

Residues 1-21 show a composition bias toward acidic residues; the sequence is MSTEDLYQEDVEMLDDYEDPS. The tract at residues 1 to 57 is disordered; that stretch reads MSTEDLYQEDVEMLDDYEDPSTEQHWSEEDGEPSGYATAEPDDHAAQEEQDEPPALD. The tract at residues 50–128 is hrcQb-C; it reads QDEPPALDSL…LQITRLVTRS (79 aa). The tract at residues 78–81 is dimer-dimer interface; that stretch reads RRLD.

The protein belongs to the FliN/MopA/SpaO family. Homotetramer. The four monomers assemble into two tightly bound homodimers. Interacts with HrcQa.

It localises to the cytoplasm. Functionally, component of the type III secretion system, which is required for effector protein delivery, parasitism, and pathogenicity. Probably participates in the formation of a C-ring-like assembly along with HrcQa. The sequence is that of Type III secretion protein HrcQb (hrcQb) from Pseudomonas savastanoi pv. phaseolicola (Pseudomonas syringae pv. phaseolicola).